A 122-amino-acid chain; its full sequence is Large ribosomal subunit protein uL14 (122 aa).

It belongs to the universal ribosomal protein uL14 family. Part of the 50S ribosomal subunit. Forms a cluster with proteins L3 and L19. In the 70S ribosome, L14 and L19 interact and together make contacts with the 16S rRNA in bridges B5 and B8.

Its function is as follows. Binds to 23S rRNA. Forms part of two intersubunit bridges in the 70S ribosome. The protein is Large ribosomal subunit protein uL14 of Cellvibrio japonicus (strain Ueda107) (Pseudomonas fluorescens subsp. cellulosa).